The primary structure comprises 583 residues: Leucine aminopeptidase 2, chloroplastic (583 aa).

A chloroplast-targeting transit peptide spans M1–Q70. 2 residues coordinate Mn(2+): K351 and D356. Residue K363 is part of the active site. Mn(2+) is bound by residues D376, D436, and E438. The active site involves R440.

Belongs to the peptidase M17 family. In terms of assembly, homohexamer (dimer of homotrimers). Mn(2+) is required as a cofactor.

The protein resides in the plastid. The protein localises to the chloroplast. It carries out the reaction Release of an N-terminal amino acid, Xaa-|-Yaa-, in which Xaa is preferably Leu, but may be other amino acids including Pro although not Arg or Lys, and Yaa may be Pro. Amino acid amides and methyl esters are also readily hydrolyzed, but rates on arylamides are exceedingly low.. The enzyme catalyses Release of N-terminal proline from a peptide.. Its function is as follows. Presumably involved in the processing and regular turnover of intracellular proteins. Catalyzes the removal of unsubstituted N-terminal amino acids from various peptides. Possesses leucine aminopeptidase activity against the model substrate leucine-amido methyl coumarin. Does not seem to possess Cys-Gly dipeptidase activity. Functionally, functions as a molecular chaperone to protect proteins from heat-induced damage. In Arabidopsis thaliana (Mouse-ear cress), this protein is Leucine aminopeptidase 2, chloroplastic.